The following is a 151-amino-acid chain: 6,7-dimethyl-8-ribityllumazine synthase (151 aa).

5-amino-6-(D-ribitylamino)uracil-binding positions include Phe-23, 55-57 (AYE), and 79-81 (AVI). Residue 84–85 (AT) participates in (2S)-2-hydroxy-3-oxobutyl phosphate binding. His-87 acts as the Proton donor in catalysis. 5-amino-6-(D-ribitylamino)uracil is bound at residue Phe-111. Arg-125 is a (2S)-2-hydroxy-3-oxobutyl phosphate binding site.

It belongs to the DMRL synthase family.

The catalysed reaction is (2S)-2-hydroxy-3-oxobutyl phosphate + 5-amino-6-(D-ribitylamino)uracil = 6,7-dimethyl-8-(1-D-ribityl)lumazine + phosphate + 2 H2O + H(+). It functions in the pathway cofactor biosynthesis; riboflavin biosynthesis; riboflavin from 2-hydroxy-3-oxobutyl phosphate and 5-amino-6-(D-ribitylamino)uracil: step 1/2. Functionally, catalyzes the formation of 6,7-dimethyl-8-ribityllumazine by condensation of 5-amino-6-(D-ribitylamino)uracil with 3,4-dihydroxy-2-butanone 4-phosphate. This is the penultimate step in the biosynthesis of riboflavin. This Leptospira interrogans serogroup Icterohaemorrhagiae serovar copenhageni (strain Fiocruz L1-130) protein is 6,7-dimethyl-8-ribityllumazine synthase.